The sequence spans 245 residues: Thymidylate kinase (245 aa).

Position 55–62 (55–62) interacts with ATP; it reads GIDGVGKS.

This sequence belongs to the thymidylate kinase family.

It catalyses the reaction dTMP + ATP = dTDP + ADP. Functionally, phosphorylation of dTMP to form dTDP in both de novo and salvage pathways of dTTP synthesis. This is Thymidylate kinase from Rhodopirellula baltica (strain DSM 10527 / NCIMB 13988 / SH1).